We begin with the raw amino-acid sequence, 181 residues long: Large ribosomal subunit protein uL5 (181 aa).

This sequence belongs to the universal ribosomal protein uL5 family. In terms of assembly, part of the 50S ribosomal subunit; contacts the 5S rRNA and probably tRNA. Forms a bridge to the 30S subunit in the 70S ribosome.

Its function is as follows. This is one of the proteins that bind and probably mediate the attachment of the 5S RNA into the large ribosomal subunit, where it forms part of the central protuberance. In the 70S ribosome it contacts protein S13 of the 30S subunit (bridge B1b), connecting the 2 subunits; this bridge is implicated in subunit movement. May contact the P site tRNA; the 5S rRNA and some of its associated proteins might help stabilize positioning of ribosome-bound tRNAs. The polypeptide is Large ribosomal subunit protein uL5 (Methanococcus vannielii).